We begin with the raw amino-acid sequence, 143 residues long: Large ribosomal subunit protein uL13 (143 aa).

Belongs to the universal ribosomal protein uL13 family. As to quaternary structure, part of the 50S ribosomal subunit.

In terms of biological role, this protein is one of the early assembly proteins of the 50S ribosomal subunit, although it is not seen to bind rRNA by itself. It is important during the early stages of 50S assembly. This Caldanaerobacter subterraneus subsp. tengcongensis (strain DSM 15242 / JCM 11007 / NBRC 100824 / MB4) (Thermoanaerobacter tengcongensis) protein is Large ribosomal subunit protein uL13.